The primary structure comprises 293 residues: Proline iminopeptidase (293 aa).

Positions Lys-28–Glu-277 constitute an AB hydrolase-1 domain. Residue Ser-104 is the Nucleophile of the active site. Residue Asp-244 is part of the active site. His-271 (proton donor) is an active-site residue.

This sequence belongs to the peptidase S33 family.

It carries out the reaction Release of N-terminal proline from a peptide.. Functionally, releases the N-terminal proline from various substrates. The sequence is that of Proline iminopeptidase from Clostridioides difficile (strain 630) (Peptoclostridium difficile).